A 629-amino-acid polypeptide reads, in one-letter code: tRNA uridine 5-carboxymethylaminomethyl modification enzyme MnmG (629 aa).

13 to 18 (GGGHAG) contacts FAD. 273–287 (GPRYCPSIEDKVNRF) is an NAD(+) binding site.

Belongs to the MnmG family. In terms of assembly, homodimer. Heterotetramer of two MnmE and two MnmG subunits. The cofactor is FAD.

It is found in the cytoplasm. In terms of biological role, NAD-binding protein involved in the addition of a carboxymethylaminomethyl (cmnm) group at the wobble position (U34) of certain tRNAs, forming tRNA-cmnm(5)s(2)U34. This is tRNA uridine 5-carboxymethylaminomethyl modification enzyme MnmG from Hahella chejuensis (strain KCTC 2396).